A 607-amino-acid polypeptide reads, in one-letter code: Probable CoA ligase CCL8 (607 aa).

ATP-binding positions include 236–244 (TSGTTGKPK), 391–396 (ERYGMT), Asp-474, 486–489 (ILGR), and Lys-591. Positions 305–391 (SVRGIWQRWR…QTITGHRLLE (87 aa)) are SBD1. The SBD2 stretch occupies residues 392–453 (RYGMTEFVMA…VRSPSLFKEY (62 aa)).

Belongs to the ATP-dependent AMP-binding enzyme family. Mostly expressed at low levels in glandular trichomes (lupulin glands) after flowering, and, to a lower extent, in stems, leaves, flowers and cones.

The protein resides in the cytoplasm. It localises to the cytosol. This Humulus lupulus (European hop) protein is Probable CoA ligase CCL8.